The following is a 394-amino-acid chain: Phosphoglycerate kinase (394 aa).

Residues aspartate 21 to asparagine 23, arginine 36, histidine 59 to arginine 62, arginine 118, and arginine 151 each bind substrate. Position 183 is a phosphoserine (serine 183). Positions 201 and 292 each coordinate ATP. Position 299 is a phosphothreonine (threonine 299). ATP-binding positions include glutamate 323 and glycine 350–serine 353.

This sequence belongs to the phosphoglycerate kinase family. As to quaternary structure, monomer.

The protein localises to the cytoplasm. It carries out the reaction (2R)-3-phosphoglycerate + ATP = (2R)-3-phospho-glyceroyl phosphate + ADP. Its pathway is carbohydrate degradation; glycolysis; pyruvate from D-glyceraldehyde 3-phosphate: step 2/5. The polypeptide is Phosphoglycerate kinase (Bacillus cereus (strain ATCC 10987 / NRS 248)).